A 477-amino-acid chain; its full sequence is Probable periplasmic serine endoprotease DegP-like (477 aa).

Positions 1–27 are cleaved as a signal peptide; that stretch reads MSIPRLKSYLTMFAAVLMLGQVLTAQA. Residues H117, D147, and S220 each act as charge relay system in the active site. Residues 218 to 220 and 275 to 279 each bind substrate; these read GNS and LGVVI. PDZ domains are found at residues 264–355 and 361–466; these read LKKD…IRNG and DISV…LRQG.

This sequence belongs to the peptidase S1C family.

Its subcellular location is the periplasm. The enzyme catalyses Acts on substrates that are at least partially unfolded. The cleavage site P1 residue is normally between a pair of hydrophobic residues, such as Val-|-Val.. Might be efficient in the degradation of transiently denatured and unfolded proteins which accumulate in the periplasm following stress conditions. The chain is Probable periplasmic serine endoprotease DegP-like from Pseudomonas putida (strain GB-1).